We begin with the raw amino-acid sequence, 176 residues long: GTP-dependent dephospho-CoA kinase (176 aa).

4 residues coordinate GTP: D47, V48, D66, and E125.

The protein belongs to the GTP-dependent DPCK family.

The catalysed reaction is 3'-dephospho-CoA + GTP = GDP + CoA + H(+). Its pathway is cofactor biosynthesis; coenzyme A biosynthesis. Its function is as follows. Catalyzes the GTP-dependent phosphorylation of the 3'-hydroxyl group of dephosphocoenzyme A to form coenzyme A (CoA). This Methanocella arvoryzae (strain DSM 22066 / NBRC 105507 / MRE50) protein is GTP-dependent dephospho-CoA kinase.